We begin with the raw amino-acid sequence, 55 residues long: Potassium channel toxin alpha-KTx 17.1 (55 aa).

Residues 1-23 form the signal peptide; sequence MKFIIVLILISVLIATIVPVNEA. Gln-24 carries the post-translational modification Pyrrolidone carboxylic acid. Intrachain disulfides connect Cys-27–Cys-43, Cys-33–Cys-48, and Cys-37–Cys-50. The residue at position 53 (Thr-53) is a Threonine amide.

The protein belongs to the short scorpion toxin superfamily. Potassium channel inhibitor family. Alpha-KTx 17 subfamily. Expressed by the venom gland.

The protein localises to the secreted. Its function is as follows. Blocker of potassium channels, which inhibits both the delayed rectifier and fast transient potassium current. The inhibition is reversible and voltage-independent. It causes a depolarizing shift of the steady-state activation curve of the currents, without changing their steady-state inactivation behavior. In Olivierus martensii (Manchurian scorpion), this protein is Potassium channel toxin alpha-KTx 17.1.